Consider the following 232-residue polypeptide: Proteasome subunit alpha (232 aa).

Belongs to the peptidase T1A family. As to quaternary structure, the 20S proteasome core is composed of 14 alpha and 14 beta subunits that assemble into four stacked heptameric rings, resulting in a barrel-shaped structure. The two inner rings, each composed of seven catalytic beta subunits, are sandwiched by two outer rings, each composed of seven alpha subunits. The catalytic chamber with the active sites is on the inside of the barrel. Has a gated structure, the ends of the cylinder being occluded by the N-termini of the alpha-subunits. Is capped by the proteasome-associated ATPase, ARC.

It is found in the cytoplasm. Its pathway is protein degradation; proteasomal Pup-dependent pathway. The formation of the proteasomal ATPase ARC-20S proteasome complex, likely via the docking of the C-termini of ARC into the intersubunit pockets in the alpha-rings, may trigger opening of the gate for substrate entry. Interconversion between the open-gate and close-gate conformations leads to a dynamic regulation of the 20S proteasome proteolysis activity. Component of the proteasome core, a large protease complex with broad specificity involved in protein degradation. In Acidimicrobium ferrooxidans (strain DSM 10331 / JCM 15462 / NBRC 103882 / ICP), this protein is Proteasome subunit alpha.